Reading from the N-terminus, the 188-residue chain is HTH-type transcriptional regulator LmrA (188 aa).

The HTH tetR-type domain maps to 4–64 (GDSREKILSA…IEAVNEMKEY (61 aa)). Residues 27–46 (GLNQIIKESGAPKGSLYYHF) constitute a DNA-binding region (H-T-H motif).

Functionally, acts as a repressor of the lincomycin-resistance (lmrAB) and yxaGH operons. In Bacillus subtilis (strain 168), this protein is HTH-type transcriptional regulator LmrA (lmrA).